Consider the following 807-residue polypeptide: Glycerol-3-phosphate acyltransferase (807 aa).

Positions 305–310 match the HXXXXD motif motif; that stretch reads CHRSHM.

The protein belongs to the GPAT/DAPAT family.

It is found in the cell inner membrane. It carries out the reaction sn-glycerol 3-phosphate + an acyl-CoA = a 1-acyl-sn-glycero-3-phosphate + CoA. It participates in phospholipid metabolism; CDP-diacylglycerol biosynthesis; CDP-diacylglycerol from sn-glycerol 3-phosphate: step 1/3. In Shigella boydii serotype 18 (strain CDC 3083-94 / BS512), this protein is Glycerol-3-phosphate acyltransferase.